The chain runs to 91 residues: Signal recognition particle 19 kDa protein (91 aa).

The protein belongs to the SRP19 family. As to quaternary structure, part of the signal recognition particle protein translocation system, which is composed of SRP and FtsY. Archaeal SRP consists of a 7S RNA molecule of 300 nucleotides and two protein subunits: SRP54 and SRP19.

It is found in the cytoplasm. In terms of biological role, involved in targeting and insertion of nascent membrane proteins into the cytoplasmic membrane. Binds directly to 7S RNA and mediates binding of the 54 kDa subunit of the SRP. The protein is Signal recognition particle 19 kDa protein of Methanoregula boonei (strain DSM 21154 / JCM 14090 / 6A8).